The sequence spans 237 residues: Exosome complex component Rrp4 (237 aa).

The region spanning 72-144 (GHIVVGKVVD…LSKDPVLTIK (73 aa)) is the S1 motif domain. The region spanning 152-211 (PRGTLVEIPPQKVPRVIGRRGSMVSMIEDLLGVKLIVGQNGRIVVVGDDPQRVEIAVLAV) is the KH domain.

Belongs to the RRP4 family. As to quaternary structure, component of the archaeal exosome complex. Forms a trimer of Rrp4 and/or Csl4 subunits. The trimer associates with a hexameric ring-like arrangement composed of 3 Rrp41-Rrp42 heterodimers.

Its subcellular location is the cytoplasm. Non-catalytic component of the exosome, which is a complex involved in RNA degradation. Increases the RNA binding and the efficiency of RNA degradation. Confers strong poly(A) specificity to the exosome. This chain is Exosome complex component Rrp4, found in Thermofilum pendens (strain DSM 2475 / Hrk 5).